A 577-amino-acid polypeptide reads, in one-letter code: Acyl-coenzyme A synthetase ACSM1, mitochondrial (577 aa).

The transit peptide at 1-31 directs the protein to the mitochondrion; the sequence is MQWLMRFRTLWGIHKSFHNIHPAPSQLRCRS. Lys-85 carries the N6-succinyllysine modification. Residue Lys-146 is modified to N6-acetyllysine; alternate. Lys-146 is modified (N6-succinyllysine; alternate). Lys-183 is modified (N6-succinyllysine). Lys-204 bears the N6-acetyllysine; alternate mark. Lys-204 is subject to N6-succinyllysine; alternate. Residue Lys-214 is modified to N6-acetyllysine. An ATP-binding site is contributed by 226-234; the sequence is TSGTTGFPK. At Lys-237 the chain carries N6-succinyllysine. Residues Lys-356 and Lys-391 each carry the N6-acetyllysine; alternate modification. An N6-succinyllysine; alternate mark is found at Lys-356 and Lys-391. Asp-452 and Arg-467 together coordinate ATP. Lys-531 carries the post-translational modification N6-acetyllysine. N6-acetyllysine; alternate is present on Lys-538. Lys-538 bears the N6-succinyllysine; alternate mark. An N6-acetyllysine modification is found at Lys-549. Lys-563 lines the ATP pocket.

It belongs to the ATP-dependent AMP-binding enzyme family. Monomer. It depends on Mg(2+) as a cofactor. Mn(2+) serves as cofactor.

Its subcellular location is the mitochondrion matrix. The protein resides in the mitochondrion. The catalysed reaction is a medium-chain fatty acid + ATP + CoA = a medium-chain fatty acyl-CoA + AMP + diphosphate. The enzyme catalyses benzoate + ATP + CoA = benzoyl-CoA + AMP + diphosphate. It carries out the reaction (R)-lipoate + GTP + H(+) = (R)-lipoyl-GMP + diphosphate. It catalyses the reaction octanoate + ATP + CoA = octanoyl-CoA + AMP + diphosphate. The catalysed reaction is decanoate + ATP + CoA = decanoyl-CoA + AMP + diphosphate. The enzyme catalyses dodecanoate + ATP + CoA = dodecanoyl-CoA + AMP + diphosphate. It carries out the reaction tetradecanoate + ATP + CoA = tetradecanoyl-CoA + AMP + diphosphate. It catalyses the reaction hexanoate + ATP + CoA = hexanoyl-CoA + AMP + diphosphate. The catalysed reaction is butanoate + ATP + CoA = butanoyl-CoA + AMP + diphosphate. The enzyme catalyses hexadecanoate + ATP + CoA = hexadecanoyl-CoA + AMP + diphosphate. With respect to regulation, activated by monovalent cations, such as potassium, rubidium or ammonium. Its function is as follows. Catalyzes the activation of fatty acids by CoA to produce an acyl-CoA, the first step in fatty acid metabolism. Capable of activating medium-chain fatty acids (e.g. butyric (C4) to decanoic (C10) acids), and certain carboxylate-containing xenobiotics, e.g. benzoate. Also catalyzes the activation of lipoate to lipoyl-nucleoside monophosphate. Activates lipoate with GTP at a 1000-fold higher rate than with ATP and activates both (R)- and (S)-lipoate to the respective lipoyl-GMP, with a preference for (R)-lipoate. The chain is Acyl-coenzyme A synthetase ACSM1, mitochondrial (ACSM1) from Homo sapiens (Human).